A 172-amino-acid polypeptide reads, in one-letter code: MIRIPFHLRQTPGRTLHSLVRSFASTKPADLSGTQEKSTRQKINFHELKHPSKVPQRPHKSTIDGQSTPTRIPVDAQKGQLLERLSLVDLDSAEAHRTLEDAIEFASQILSVDTDDVEPLYTVLERERLTLREDRVSDGNIQQDVLRNARVTEEENFVAPPENIPLEQEPRK.

A mitochondrion-targeting transit peptide spans 1–23; it reads MIRIPFHLRQTPGRTLHSLVRSF. The disordered stretch occupies residues 51–73; it reads PSKVPQRPHKSTIDGQSTPTRIP.

It belongs to the GatC family. In terms of assembly, subunit of the heterotrimeric GatCAB amidotransferase (AdT) complex, composed of A, B and C subunits.

The protein localises to the mitochondrion. The catalysed reaction is L-glutamyl-tRNA(Gln) + L-glutamine + ATP + H2O = L-glutaminyl-tRNA(Gln) + L-glutamate + ADP + phosphate + H(+). Functionally, allows the formation of correctly charged Gln-tRNA(Gln) through the transamidation of misacylated Glu-tRNA(Gln) in the mitochondria. The reaction takes place in the presence of glutamine and ATP through an activated gamma-phospho-Glu-tRNA(Gln). The protein is Glutamyl-tRNA(Gln) amidotransferase subunit C-4, mitochondrial of Culex quinquefasciatus (Southern house mosquito).